The sequence spans 406 residues: Pyruvate dehydrogenase E1 component subunit beta-2, chloroplastic (406 aa).

The N-terminal 44 residues, 1–44 (MSSIIHGAGAATTTLSTFNSVDSKKLFVAPSRTNLSVRSQRYIV), are a transit peptide targeting the chloroplast. Glu142 is a binding site for thiamine diphosphate. Positions 195, 243, 244, and 248 each coordinate K(+).

In terms of assembly, tetramer of 2 alpha and 2 beta subunits. The cofactor is thiamine diphosphate.

It is found in the plastid. The protein localises to the chloroplast. The catalysed reaction is N(6)-[(R)-lipoyl]-L-lysyl-[protein] + pyruvate + H(+) = N(6)-[(R)-S(8)-acetyldihydrolipoyl]-L-lysyl-[protein] + CO2. Functionally, the pyruvate dehydrogenase complex catalyzes the overall conversion of pyruvate to acetyl-CoA and CO(2). It contains multiple copies of three enzymatic components: pyruvate dehydrogenase (E1), dihydrolipoamide acetyltransferase (E2) and lipoamide dehydrogenase (E3). This Arabidopsis thaliana (Mouse-ear cress) protein is Pyruvate dehydrogenase E1 component subunit beta-2, chloroplastic (PDH-E1 BETA).